A 428-amino-acid polypeptide reads, in one-letter code: Chaperone SurA (428 aa).

Residues 1–13 form the signal peptide; the sequence is MLGALLLSGAVHA. 2 consecutive PpiC domains span residues 164 to 265 and 276 to 375; these read SEEF…KLLE and RDEV…EVLG.

It is found in the periplasm. It catalyses the reaction [protein]-peptidylproline (omega=180) = [protein]-peptidylproline (omega=0). Functionally, chaperone involved in the correct folding and assembly of outer membrane proteins. Recognizes specific patterns of aromatic residues and the orientation of their side chains, which are found more frequently in integral outer membrane proteins. May act in both early periplasmic and late outer membrane-associated steps of protein maturation. The sequence is that of Chaperone SurA from Pseudomonas syringae pv. tomato (strain ATCC BAA-871 / DC3000).